The sequence spans 62 residues: Photosystem II reaction center protein Z (62 aa).

2 consecutive transmembrane segments (helical) span residues Leu-8–Ser-28 and Val-41–Val-61.

This sequence belongs to the PsbZ family. In terms of assembly, PSII is composed of 1 copy each of membrane proteins PsbA, PsbB, PsbC, PsbD, PsbE, PsbF, PsbH, PsbI, PsbJ, PsbK, PsbL, PsbM, PsbT, PsbX, PsbY, PsbZ, Psb30/Ycf12, at least 3 peripheral proteins of the oxygen-evolving complex and a large number of cofactors. It forms dimeric complexes.

It localises to the plastid. Its subcellular location is the chloroplast thylakoid membrane. May control the interaction of photosystem II (PSII) cores with the light-harvesting antenna, regulates electron flow through the 2 photosystem reaction centers. PSII is a light-driven water plastoquinone oxidoreductase, using light energy to abstract electrons from H(2)O, generating a proton gradient subsequently used for ATP formation. The sequence is that of Photosystem II reaction center protein Z from Cyanidioschyzon merolae (strain NIES-3377 / 10D) (Unicellular red alga).